We begin with the raw amino-acid sequence, 545 residues long: ATP synthase subunit alpha (545 aa).

Residue 172–179 (GDRKTGKT) participates in ATP binding. The disordered stretch occupies residues 511–545 (FQTTDGTPVINEPEARPLGDDEVTKSQITVSRKTQ). A compositionally biased stretch (basic and acidic residues) spans 523–534 (PEARPLGDDEVT). The span at 535–545 (KSQITVSRKTQ) shows a compositional bias: polar residues.

The protein belongs to the ATPase alpha/beta chains family. F-type ATPases have 2 components, CF(1) - the catalytic core - and CF(0) - the membrane proton channel. CF(1) has five subunits: alpha(3), beta(3), gamma(1), delta(1), epsilon(1). CF(0) has three main subunits: a(1), b(2) and c(9-12). The alpha and beta chains form an alternating ring which encloses part of the gamma chain. CF(1) is attached to CF(0) by a central stalk formed by the gamma and epsilon chains, while a peripheral stalk is formed by the delta and b chains.

It is found in the cell membrane. The catalysed reaction is ATP + H2O + 4 H(+)(in) = ADP + phosphate + 5 H(+)(out). In terms of biological role, produces ATP from ADP in the presence of a proton gradient across the membrane. The alpha chain is a regulatory subunit. The sequence is that of ATP synthase subunit alpha from Corynebacterium jeikeium (strain K411).